Reading from the N-terminus, the 402-residue chain is S-adenosylmethionine synthase (402 aa).

140–145 (GNGSID) provides a ligand contact to ATP.

This sequence belongs to the AdoMet synthase 2 family. Mg(2+) is required as a cofactor.

The catalysed reaction is L-methionine + ATP + H2O = S-adenosyl-L-methionine + phosphate + diphosphate. It functions in the pathway amino-acid biosynthesis; S-adenosyl-L-methionine biosynthesis; S-adenosyl-L-methionine from L-methionine: step 1/1. Its function is as follows. Catalyzes the formation of S-adenosylmethionine from methionine and ATP. The polypeptide is S-adenosylmethionine synthase (Picrophilus torridus (strain ATCC 700027 / DSM 9790 / JCM 10055 / NBRC 100828 / KAW 2/3)).